A 782-amino-acid chain; its full sequence is Endonuclease MutS2 (782 aa).

ATP is bound at residue 336–343 (GPNTGGKT). One can recognise a Smr domain in the interval 707–782 (LDLRGYRYEE…GFGVTVAELK (76 aa)).

This sequence belongs to the DNA mismatch repair MutS family. MutS2 subfamily. As to quaternary structure, homodimer. Binds to stalled ribosomes, contacting rRNA.

Its function is as follows. Endonuclease that is involved in the suppression of homologous recombination and thus may have a key role in the control of bacterial genetic diversity. Acts as a ribosome collision sensor, splitting the ribosome into its 2 subunits. Detects stalled/collided 70S ribosomes which it binds and splits by an ATP-hydrolysis driven conformational change. Acts upstream of the ribosome quality control system (RQC), a ribosome-associated complex that mediates the extraction of incompletely synthesized nascent chains from stalled ribosomes and their subsequent degradation. Probably generates substrates for RQC. This chain is Endonuclease MutS2, found in Staphylococcus carnosus (strain TM300).